The chain runs to 255 residues: Pimeloyl-[acyl-carrier protein] methyl ester esterase (255 aa).

Positions 16–242 (LVLLHGWGMN…SSHAPFITEP (227 aa)) constitute an AB hydrolase-1 domain. Substrate contacts are provided by residues Trp22, 82-83 (SL), and 143-147 (FMALQ). The active-site Nucleophile is the Ser82. Catalysis depends on residues Asp207 and His235. His235 contacts substrate.

The protein belongs to the AB hydrolase superfamily. Carboxylesterase BioH family. Monomer.

It is found in the cytoplasm. It carries out the reaction 6-carboxyhexanoyl-[ACP] methyl ester + H2O = 6-carboxyhexanoyl-[ACP] + methanol + H(+). It functions in the pathway cofactor biosynthesis; biotin biosynthesis. Functionally, the physiological role of BioH is to remove the methyl group introduced by BioC when the pimeloyl moiety is complete. It allows to synthesize pimeloyl-ACP via the fatty acid synthetic pathway through the hydrolysis of the ester bonds of pimeloyl-ACP esters. The sequence is that of Pimeloyl-[acyl-carrier protein] methyl ester esterase from Vibrio vulnificus (strain YJ016).